Reading from the N-terminus, the 375-residue chain is tRNA-specific 2-thiouridylase MnmA (375 aa).

ATP-binding positions include 12-19 (GMSGGVDS) and Met38. Positions 98–100 (NPD) are interaction with target base in tRNA. Cys103 functions as the Nucleophile in the catalytic mechanism. A disulfide bridge connects residues Cys103 and Cys200. An ATP-binding site is contributed by Gly127. The interaction with tRNA stretch occupies residues 150-152 (KDQ). The active-site Cysteine persulfide intermediate is Cys200. The segment at 312–313 (RY) is interaction with tRNA.

The protein belongs to the MnmA/TRMU family.

The protein localises to the cytoplasm. It catalyses the reaction S-sulfanyl-L-cysteinyl-[protein] + uridine(34) in tRNA + AH2 + ATP = 2-thiouridine(34) in tRNA + L-cysteinyl-[protein] + A + AMP + diphosphate + H(+). Functionally, catalyzes the 2-thiolation of uridine at the wobble position (U34) of tRNA, leading to the formation of s(2)U34. The polypeptide is tRNA-specific 2-thiouridylase MnmA (Lactobacillus delbrueckii subsp. bulgaricus (strain ATCC 11842 / DSM 20081 / BCRC 10696 / JCM 1002 / NBRC 13953 / NCIMB 11778 / NCTC 12712 / WDCM 00102 / Lb 14)).